A 203-amino-acid chain; its full sequence is Imidazoleglycerol-phosphate dehydratase (203 aa).

The protein belongs to the imidazoleglycerol-phosphate dehydratase family.

It localises to the cytoplasm. It carries out the reaction D-erythro-1-(imidazol-4-yl)glycerol 3-phosphate = 3-(imidazol-4-yl)-2-oxopropyl phosphate + H2O. Its pathway is amino-acid biosynthesis; L-histidine biosynthesis; L-histidine from 5-phospho-alpha-D-ribose 1-diphosphate: step 6/9. This chain is Imidazoleglycerol-phosphate dehydratase, found in Synechococcus sp. (strain RCC307).